The sequence spans 765 residues: 5-methyltetrahydropteroyltriglutamate--homocysteine methyltransferase 2 (765 aa).

Residues K18 and N116 each coordinate 5-methyltetrahydropteroyltri-L-glutamate. L-homocysteine contacts are provided by residues 437-439 (IGS) and E490. L-methionine-binding positions include 437-439 (IGS) and E490. Residues D495, Y518, 521–522 (RC), and W567 each bind 5-methyltetrahydropteroyltri-L-glutamate. D605 provides a ligand contact to L-homocysteine. L-methionine is bound at residue D605. Zn(2+)-binding residues include H647, C649, H658, D662, and E671. H701 acts as the Proton donor in catalysis. Zn(2+) is bound at residue C733.

This sequence belongs to the vitamin-B12 independent methionine synthase family. The cofactor is Zn(2+). As to expression, expressed in leaves, stems and siliques.

The protein localises to the cytoplasm. It localises to the cytosol. The catalysed reaction is 5-methyltetrahydropteroyltri-L-glutamate + L-homocysteine = tetrahydropteroyltri-L-glutamate + L-methionine. It participates in amino-acid biosynthesis; L-methionine biosynthesis via de novo pathway; L-methionine from L-homocysteine (MetE route): step 1/1. Catalyzes the transfer of a methyl group from 5-methyltetrahydrofolate to homocysteine resulting in methionine formation. This Arabidopsis thaliana (Mouse-ear cress) protein is 5-methyltetrahydropteroyltriglutamate--homocysteine methyltransferase 2 (MS2).